A 144-amino-acid polypeptide reads, in one-letter code: HTH-type transcriptional repressor NsrR (144 aa).

Residues 2–129 form the HTH rrf2-type domain; it reads QLTSFTDYGL…DKHTLLSLID (128 aa). The H-T-H motif DNA-binding region spans 28 to 51; sequence ISKVTEVYGVSRNHMVKIINKLGQ. [2Fe-2S] cluster is bound by residues Cys91, Cys96, and Cys102.

Requires [2Fe-2S] cluster as cofactor.

Functionally, nitric oxide-sensitive repressor of genes involved in protecting the cell against nitrosative stress. May require iron for activity. The polypeptide is HTH-type transcriptional repressor NsrR (Photobacterium profundum (strain SS9)).